The chain runs to 6930 residues: Replicase polyprotein 1ab (6930 aa).

Residues 10-131 (LKSMVVTTLK…DIDIQIRKYG (122 aa)) enclose the CoV Nsp1 globular domain. The 27-residue stretch at 149–175 (DPGPDVGPYLDFPDNCCPTKPKAKRGG) folds into the BetaCoV Nsp1 C-terminal domain. Residues 177–431 (VYLSDQYGFD…ELVEYLIEGI (255 aa)) form the CoV Nsp2 N-terminal domain. Zn(2+) is bound by residues cysteine 312, cysteine 315, cysteine 331, and cysteine 333. The segment at 312–333 (CSYCDYYGWTPLKDIGTVNCLC) is C4. The CoV Nsp2 middle domain maps to 432-644 (RVDADTLDNP…CDLLTTIMSK (213 aa)). The CoV Nsp2 C-terminal domain occupies 646-772 (LTSVKWAGCK…LGKAFRLRGG (127 aa)). Residues 775–885 (SKVTFGDEEV…MYFSLEDAVP (111 aa)) enclose the Ubiquitin-like 1 domain. In terms of domain architecture, Macro 1 spans 930–1097 (MTTPCGYTKI…LYERALATSF (168 aa)). Residues 1188–1207 (KRPPPIVPQQTVEQQPQEIS) form a disordered region. The span at 1195–1206 (PQQTVEQQPQEI) shows a compositional bias: low complexity. The Macro 2 domain maps to 1216-1340 (LVDVVSMSFS…LYRAYFNGVF (125 aa)). One can recognise a DPUP domain in the interval 1345–1417 (TAVQDFVVDI…VSKARAYLET (73 aa)). Residues 1423–1478 (EPLIKVLTTVDGINYSTVLVSTAQSYRAQIGTVFCDGHDWSNKNPMPTDEGTHLYK) form the Ubiquitin-like 2 domain. Residues 1492-1757 (EYYGVDDSNI…RTTIDPDFSK (266 aa)) enclose the Peptidase C16 domain. The active-site For PL-PRO activity is the cysteine 1533. 4 residues coordinate Zn(2+): cysteine 1610, cysteine 1613, cysteine 1645, and cysteine 1647. The segment at 1610–1647 (CEHCGVSQMVFTGTDACTFYGSVVLDDLYAPVSVVCQC) adopts a C4-type zinc-finger fold. Active-site for PL-PRO activity residues include histidine 1694 and aspartate 1708. Residues 1770 to 1870 (PIEVVAAPKL…PLLSTVVVNT (101 aa)) enclose the Nucleic acid-binding domain. The region spanning 1883–2012 (PVNNETSEEP…KTADFVRSTN (130 aa)) is the G2M domain. A run of 3 helical transmembrane segments spans residues 2015–2035 (SKCV…WLLV), 2040–2060 (IVKV…TCVL), and 2081–2101 (YMLY…WLSE). Residues 2015 to 2238 (SKCVGLLCLF…IVIAFLWLCY (224 aa)) form an HD1 region. Residues 2105-2162 (PSLVTRFKYFLGIVMPCDYVLVNETGTGWLHHLCMAGMDSLDYPALRMQQHRYGSPYN) form the 3Ecto domain. A disulfide bridge connects residues cysteine 2121 and cysteine 2138. 3 consecutive transmembrane segments (helical) span residues 2162–2182 (NYTY…YTPA), 2183–2203 (LPIV…PIPL), and 2218–2238 (LVPF…WLCY). The tract at residues 2239 to 2329 (KGFLHVRYGC…QFKRPIIHTD (91 aa)) is Y1. The CoV Nsp3 Y domain occupies 2239–2610 (KGFLHVRYGC…MVTPFKIIGG (372 aa)). The Zn(2+) site is built by histidine 2243, cysteine 2248, cysteine 2253, cysteine 2256, cysteine 2289, histidine 2292, cysteine 2296, and cysteine 2299. The segment at 2243–2256 (HVRYGCNNVACLMC) is ZF1. The tract at residues 2289–2299 (CTKHNWNCVSC) is ZF2. A Y2 region spans residues 2330–2425 (EAYYEVTSVE…LVDKRMVGVV (96 aa)). The interval 2330–2610 (EAYYEVTSVE…MVTPFKIIGG (281 aa)) is coV-Y. A Y3 region spans residues 2426–2509 (GDDATIARAM…SCIRLCHQEG (84 aa)). The Y4 stretch occupies residues 2510–2610 (WEWTTDSWNN…MVTPFKIIGG (101 aa)). Transmembrane regions (helical) follow at residues 2621 to 2641 (LIHV…PWYI), 2719 to 2739 (VGTT…SVCY), 2865 to 2885 (AFDL…AVDI), 2887 to 2907 (TSIL…YYLL), 2916 to 2936 (YSGV…VLCL), 2946 to 2966 (IYAM…ACMM), and 2970 to 2990 (FLIM…IVVV). The tract at residues 2621–2990 (LIHVFMLLVV…WVTVLYIVVV (370 aa)) is HD2. One can recognise a Nsp4C domain in the interval 3007–3103 (VQVGDLAFHS…RCSVASAALQ (97 aa)). The Peptidase C30 domain occupies 3104-3409 (AGLTRMAHPS…GRQMLGVKLQ (306 aa)). Catalysis depends on for 3CL-PRO activity residues histidine 3144 and cysteine 3248. The next 7 helical transmembrane spans lie at 3423–3443 (FAII…WTFV), 3449–3469 (TLLL…SLLI), 3474–3494 (TYLT…NFQY), 3517–3537 (VIGT…LLSV), 3569–3589 (VAIS…GVAC), 3592–3612 (LYAA…ILLL), and 3620–3640 (LVCY…FNLI). The segment at 3423–3640 (FAIIFVLTIL…TCYFGVFNLI (218 aa)) is HD3. The region spanning 3700–3782 (SNMTDLKCTS…SILENNSVLQ (83 aa)) is the RdRp Nsp7 cofactor domain. One can recognise a RdRp Nsp8 cofactor domain in the interval 3783 to 3982 (AVASEFSNLS…QQATSPVKLQ (200 aa)). Residues 3983–4094 (NNELMPQTVK…GTLACTVRLH (112 aa)) enclose the Nsp9 ssRNA-binding domain. Residues 4095-4233 (AGSATEVASN…CSSLREINLQ (139 aa)) enclose the ExoN/MTase coactivator domain. Cysteine 4168, cysteine 4171, histidine 4177, cysteine 4184, cysteine 4211, cysteine 4214, cysteine 4222, and cysteine 4224 together coordinate Zn(2+). 2 zinc fingers span residues 4168-4184 (CLYC…SGVC) and 4211-4224 (CAVC…GCPC). The NiRAN domain maps to 4239 to 4494 (FLNRVRGTSG…AAECHVDGDF (256 aa)). Residues asparagine 4442 and aspartate 4451 each contribute to the Mn(2+) site. The Nsp12 Interface domain maps to 4499–4597 (RVWDICKYDY…MNQDIRQHAQ (99 aa)). 5 residues coordinate Zn(2+): histidine 4528, cysteine 4534, cysteine 4539, cysteine 4543, and cysteine 4720. The Nsp12 RNA-dependent RNA polymerase domain occupies 4598 to 5165 (RLSLRELLVY…NMYMESATLQ (568 aa)). Residues 4600–4814 (SLRELLVYAA…HQKMLKSIAA (215 aa)) form a rdRp Fingers N-ter region. The rdRp Palm N-ter stretch occupies residues 4815-4853 (ARGASVVIGTTKFYGGWNRMLRTLCEGVENPHLMGWDYP). Residues 4845–5007 (PHLMGWDYPK…CYNADYAQKG (163 aa)) form the RdRp catalytic domain. The segment at 4854–4912 (KCDRAMPNLLRIFASLILARKHATCCNASERFYRLANECAQVLSEMVLCGGGFYVKPGG) is rdRp Fingers C-ter. The Zn(2+) site is built by histidine 4875, cysteine 4878, and cysteine 4879. Positions 4913 to 5048 (TSSGDSTTAY…TKGPHEFCSQ (136 aa)) are rdRp Palm C-ter. Catalysis depends on residues serine 4992, aspartate 4993, and aspartate 4994. Positions 5049–5165 (HTMLVDMKGE…NMYMESATLQ (117 aa)) are rdRp Thumb. Residues 5166–5278 (SVGTCVVCNS…ADFNSLATCD (113 aa)) form the CV ZBD domain. Zn(2+) is bound by residues cysteine 5170, cysteine 5173, cysteine 5181, cysteine 5184, cysteine 5191, cysteine 5194, histidine 5198, histidine 5204, cysteine 5215, cysteine 5220, cysteine 5237, and histidine 5240. A (+)RNA virus helicase ATP-binding domain is found at 5412 to 5603 (TKLVGLYPAM…MVAVGPDIFL (192 aa)). An ATP-binding site is contributed by 5447–5454 (GPPGTGKS). One can recognise a (+)RNA virus helicase C-terminal domain in the interval 5604 to 5778 (ATCYRCPKEI…VTVGLFKDCA (175 aa)). Residues 5838-6056 (LFITREQAIR…RCLAIHDCFC (219 aa)) enclose the ExoN domain. Catalysis depends on residues aspartate 5856, glutamate 5858, and glutamate 5957. Zn(2+) contacts are provided by cysteine 5973, cysteine 5976, cysteine 5992, histidine 5995, histidine 6026, cysteine 6030, and histidine 6033. Residues histidine 6037 and aspartate 6042 contribute to the active site. Cysteine 6048 is a Zn(2+) binding site. In terms of domain architecture, N7-MTase spans 6065–6296 (YPIIANELAI…NLWSTFVKLQ (232 aa)). An S-adenosyl-L-methionine-binding site is contributed by 6100–6106 (DIGNPKA). The gpppA-binding stretch occupies residues 6180-6194 (CNGGSLYVNQHAFHT). Zn(2+) is bound by residues cysteine 6218, cysteine 6242, cysteine 6253, and histidine 6256. Positions 6297–6357 (SLENVAYNVL…NVAFELWAKR (61 aa)) constitute a Nsp15 N-terminal oligomerization domain. The region spanning 6358–6476 (SVNVVPEVKL…YAMRKDGAFV (119 aa)) is the AV-Nsp11N/CoV-Nsp15M domain. Residues 6493–6630 (QPRTQLEIDF…KGGKISTFYP (138 aa)) form the NendoU domain. Active-site residues include histidine 6523, histidine 6537, lysine 6576, lysine 6679, aspartate 6763, lysine 6803, and glutamate 6836. The region spanning 6635 to 6928 (KQDWKPGYSM…DIGVRGVACS (294 aa)) is the Nidovirus-type SAM-dependent 2'-O-MTase domain.

This sequence belongs to the coronaviruses polyprotein 1ab family. Interacts with host PHB and PHB2. As to quaternary structure, interacts with papain-like protease nsp3 and non-structural protein 6. In terms of assembly, monomer. Homodimer. Only the homodimer shows catalytic activity. Interacts with nsp8 and nsp12 to form the replication-transcription complex (RTC): nsp12, nsp7, two subunits of nsp8, and up to two subunits of nsp13. As to quaternary structure, interacts with nsp7, nsp13 and nsp12 to form the replication-transcription complex (RTC): nsp12, nsp7, two subunits of nsp8, and up to two subunits of nsp13. In terms of assembly, interacts with nsp12. Interacts with proofreading exoribonuclease nsp14 and 2'-O-methyltransferase nsp16; these interactions enhance nsp14 and nsp16 enzymatic activities. As to quaternary structure, interacts with nsp7 and nsp8 to form the replication-transcription complex (RTC): nsp12, nsp7, two subunits of nsp8, and up to two subunits of nsp13. Interacts with nsp9. In terms of assembly, interacts with nsp8 to form the replication-transcription complex (RTC): nsp12, nsp7, two subunits of nsp8, and up to two subunits of nsp13. Mn(2+) serves as cofactor. The cofactor is Mg(2+). Specific enzymatic cleavages in vivo by its own proteases yield mature proteins. 3CL-PRO and PL-PRO proteinases are autocatalytically processed.

The protein localises to the host membrane. It localises to the host cytoplasm. It is found in the host perinuclear region. The protein resides in the host endoplasmic reticulum-Golgi intermediate compartment. It catalyses the reaction RNA(n) + a ribonucleoside 5'-triphosphate = RNA(n+1) + diphosphate. It carries out the reaction ATP + H2O = ADP + phosphate + H(+). The catalysed reaction is Thiol-dependent hydrolysis of ester, thioester, amide, peptide and isopeptide bonds formed by the C-terminal Gly of ubiquitin (a 76-residue protein attached to proteins as an intracellular targeting signal).. The enzyme catalyses a 5'-end (N(7)-methyl 5'-triphosphoguanosine)-ribonucleoside in mRNA + S-adenosyl-L-methionine = a 5'-end (N(7)-methyl 5'-triphosphoguanosine)-(2'-O-methyl-ribonucleoside) in mRNA + S-adenosyl-L-homocysteine + H(+). It catalyses the reaction uridylyl-uridylyl-ribonucleotide-RNA = a 3'-end uridylyl-2',3'-cyclophospho-uridine-RNA + a 5'-end dephospho-ribonucleoside-RNA. It carries out the reaction a 5'-end diphospho-ribonucleoside in mRNA + GTP + H(+) = a 5'-end (5'-triphosphoguanosine)-ribonucleoside in mRNA + diphosphate. The catalysed reaction is a 5'-end (5'-triphosphoguanosine)-ribonucleoside in mRNA + S-adenosyl-L-methionine = a 5'-end (N(7)-methyl 5'-triphosphoguanosine)-ribonucleoside in mRNA + S-adenosyl-L-homocysteine. In terms of biological role, the replicase polyprotein of coronaviruses is a multifunctional protein: it contains the activities necessary for the transcription of negative stranded RNA, leader RNA, subgenomic mRNAs and progeny virion RNA as well as proteinases responsible for the cleavage of the polyprotein into functional products. Its function is as follows. Inhibits host translation by interacting with the 40S ribosomal subunit. The nsp1-40S ribosome complex further induces an endonucleolytic cleavage near the 5'UTR of host mRNAs, targeting them for degradation. Viral mRNAs are not susceptible to nsp1-mediated endonucleolytic RNA cleavage thanks to the presence of a 5'-end leader sequence and are therefore protected from degradation. By suppressing host gene expression, nsp1 facilitates efficient viral gene expression in infected cells and evasion from host immune response. Functionally, may play a role in the modulation of host cell survival signaling pathway by interacting with host PHB and PHB2. Indeed, these two proteins play a role in maintaining the functional integrity of the mitochondria and protecting cells from various stresses. Responsible for the cleavages located at the N-terminus of the replicase polyprotein. In addition, PL-PRO possesses a deubiquitinating/deISGylating activity and processes both 'Lys-48'- and 'Lys-63'-linked polyubiquitin chains from cellular substrates. Participates together with nsp4 in the assembly of virally-induced cytoplasmic double-membrane vesicles necessary for viral replication. Antagonizes innate immune induction of type I interferon by blocking the phosphorylation, dimerization and subsequent nuclear translocation of host IRF3. Also prevents host NF-kappa-B signaling. In terms of biological role, participates in the assembly of virally-induced cytoplasmic double-membrane vesicles necessary for viral replication. Its function is as follows. Cleaves the C-terminus of replicase polyprotein at 11 sites. Recognizes substrates containing the core sequence [ILMVF]-Q-|-[SGACN]. Also able to bind an ADP-ribose-1''-phosphate (ADRP). Functionally, plays a role in the initial induction of autophagosomes from host endoplasmic reticulum. Later, limits the expansion of these phagosomes that are no longer able to deliver viral components to lysosomes. Forms a hexadecamer with nsp8 (8 subunits of each) that may participate in viral replication by acting as a primase. Alternatively, may synthesize substantially longer products than oligonucleotide primers. In terms of biological role, forms a hexadecamer with nsp7 (8 subunits of each) that may participate in viral replication by acting as a primase. Alternatively, may synthesize substantially longer products than oligonucleotide primers. Its function is as follows. Forms a primer, NSP9-pU, which is utilized by the polymerase for the initiation of RNA chains. Interacts with ribosome signal recognition particle RNA (SRP). Together with NSP8, suppress protein integration into the cell membrane, thereby disrupting host immune defenses. Functionally, plays a pivotal role in viral transcription by stimulating both nsp14 3'-5' exoribonuclease and nsp16 2'-O-methyltransferase activities. Therefore plays an essential role in viral mRNAs cap methylation. RNA-directed RNA polymerase that catalyzes the transcription of viral genomic and subgenomic RNAs. Acts in complex with nsp7 and nsp8 to transcribe both the minus and positive strands of genomic RNA. The kinase-like NiRAN domain of NSP12 attaches one or more nucleotides to the amino terminus of NSP9, forming a covalent RNA-protein intermediate that serves as transcription/replication primer. Subgenomic RNAs (sgRNAs) are formed by discontinuous transcription: The polymerase has the ability to pause at transcription-regulating sequences (TRS) and jump to the leader TRS, resulting in a major deletion. This creates a series of subgenomic RNAs that are replicated, transcribed and translated. In addition, Nsp12 is a subunit of the viral RNA capping enzyme that catalyzes the RNA guanylyltransferase reaction for genomic and sub-genomic RNAs. Subsequently, the NiRAN domain transfers RNA to GDP, and forms the core cap structure GpppA-RNA. In terms of biological role, multi-functional protein with a zinc-binding domain in N-terminus displaying RNA and DNA duplex-unwinding activities with 5' to 3' polarity. Activity of helicase is dependent on magnesium. Its function is as follows. Plays a role in viral RNA synthesis through two distinct activities. The N7-guanine methyltransferase activity plays a role in the formation of the cap structure GpppA-RNA. The proofreading exoribonuclease reduces the sensitivity of the virus to RNA mutagens during replication. This activity acts on both ssRNA and dsRNA in a 3'-5' direction. Functionally, plays a role in viral transcription/replication and prevents the simultaneous activation of host cell dsRNA sensors, such as MDA5/IFIH1, OAS, and PKR. Acts by degrading the 5'-polyuridines generated during replication of the poly(A) region of viral genomic and subgenomic RNAs. Catalyzes a two-step reaction in which a 2'3'-cyclic phosphate (2'3'-cP) is first generated by 2'-O transesterification, which is then hydrolyzed to a 3'-phosphate (3'-P). If not degraded, poly(U) RNA would hybridize with poly(A) RNA tails and activate host dsRNA sensors. Methyltransferase that mediates mRNA cap 2'-O-ribose methylation to the 5'-cap structure of viral mRNAs. N7-methyl guanosine cap is a prerequisite for binding of nsp16. Therefore plays an essential role in viral mRNAs cap methylation which is essential to evade immune system. The protein is Replicase polyprotein 1ab (rep) of Bat coronavirus HKU9 (BtCoV).